The sequence spans 229 residues: Small ribosomal subunit protein uS3 (229 aa).

Positions 38-106 constitute a KH type-2 domain; it reads IREYIENKLF…KVHINVMEVK (69 aa). Residues 208 to 217 are compositionally biased toward acidic residues; that stretch reads PEVDENEETK. The disordered stretch occupies residues 208-229; that stretch reads PEVDENEETKEENKEKSEEKSE. Over residues 218–229 the composition is skewed to basic and acidic residues; it reads EENKEKSEEKSE.

The protein belongs to the universal ribosomal protein uS3 family. Part of the 30S ribosomal subunit. Forms a tight complex with proteins S10 and S14.

Functionally, binds the lower part of the 30S subunit head. Binds mRNA in the 70S ribosome, positioning it for translation. This chain is Small ribosomal subunit protein uS3, found in Natranaerobius thermophilus (strain ATCC BAA-1301 / DSM 18059 / JW/NM-WN-LF).